The primary structure comprises 273 residues: Vacuolar membrane protein YPL162C (273 aa).

Residues 1 to 13 lie on the Vacuolar side of the membrane; that stretch reads MYVSNGKDTCQLL. Residues 14–34 traverse the membrane as a helical segment; sequence GPVSLFVQTLMGMTAVIVLLV. The Cytoplasmic segment spans residues 35-51; sequence KRNYEHPRRKMIVWSYD. Residues 52 to 72 form a helical membrane-spanning segment; the sequence is IGKQIIGSLGIHFLNLGISIL. Residues 73 to 97 are Vacuolar-facing; sequence KKRRRSLFAITAKGNDDEDQCDWYF. Residues 98-118 traverse the membrane as a helical segment; the sequence is LNLLLDTTVGIPILWLCLYII. Over 119–156 the chain is Cytoplasmic; that stretch reads EKVLKSLHFQNIESGNYFPSKTVGSHPRKPLFSAFVKQ. The chain crosses the membrane as a helical span at residues 157–177; the sequence is LLIFIVGLGVMKFCVFLILNY. Over 178-198 the chain is Vacuolar; that stretch reads LEDLAYWFADLILGWSDSWPN. A helical membrane pass occupies residues 199-219; the sequence is FQVFLVMFVFPILLNCFQYFC. The Cytoplasmic portion of the chain corresponds to 220-273; sequence VDNVIRLHSESLTITNAENFETNTFLNDEIPDLSEVSNEVPNKDNNISSYGSII.

It is found in the vacuole membrane. In Saccharomyces cerevisiae (strain ATCC 204508 / S288c) (Baker's yeast), this protein is Vacuolar membrane protein YPL162C.